Consider the following 896-residue polypeptide: Translation initiation factor IF-2 (896 aa).

Disordered stretches follow at residues 53-81 (HGGE…SASK) and 117-301 (AEEA…ESMD). Polar residues predominate over residues 60–79 (TKMTLQRKSVSTLSVGSGSA). Over residues 117-227 (AEEAASKAKA…ESEKTGDHHV (111 aa)) the composition is skewed to basic and acidic residues. Residues 254 to 266 (ATPAPAAAPANTG) are compositionally biased toward low complexity. Over residues 273–282 (GKDNRRDSRN) the composition is skewed to basic and acidic residues. The span at 283–294 (ARGGRNARNNRS) shows a compositional bias: low complexity. One can recognise a tr-type G domain in the interval 394-563 (SRAPVVTIMG…LLEAEVLELK (170 aa)). Residues 403 to 410 (GHVDHGKT) are G1. Position 403-410 (403-410 (GHVDHGKT)) interacts with GTP. The segment at 428–432 (GITQH) is G2. A G3 region spans residues 449–452 (DTPG). GTP is bound by residues 449 to 453 (DTPGH) and 503 to 506 (NKID). The interval 503-506 (NKID) is G4. The segment at 539–541 (SAK) is G5.

Belongs to the TRAFAC class translation factor GTPase superfamily. Classic translation factor GTPase family. IF-2 subfamily.

It localises to the cytoplasm. Its function is as follows. One of the essential components for the initiation of protein synthesis. Protects formylmethionyl-tRNA from spontaneous hydrolysis and promotes its binding to the 30S ribosomal subunits. Also involved in the hydrolysis of GTP during the formation of the 70S ribosomal complex. In Shewanella sediminis (strain HAW-EB3), this protein is Translation initiation factor IF-2.